A 342-amino-acid chain; its full sequence is Phosphate acyltransferase (342 aa).

The protein belongs to the PlsX family. Homodimer. Probably interacts with PlsY.

It is found in the cytoplasm. It carries out the reaction a fatty acyl-[ACP] + phosphate = an acyl phosphate + holo-[ACP]. It participates in lipid metabolism; phospholipid metabolism. Functionally, catalyzes the reversible formation of acyl-phosphate (acyl-PO(4)) from acyl-[acyl-carrier-protein] (acyl-ACP). This enzyme utilizes acyl-ACP as fatty acyl donor, but not acyl-CoA. In Blochmanniella pennsylvanica (strain BPEN), this protein is Phosphate acyltransferase.